Here is a 432-residue protein sequence, read N- to C-terminus: Tol-Pal system protein TolB (432 aa).

The signal sequence occupies residues 1–21 (MSTLIRIALFALALMAGAAQA).

This sequence belongs to the TolB family. The Tol-Pal system is composed of five core proteins: the inner membrane proteins TolA, TolQ and TolR, the periplasmic protein TolB and the outer membrane protein Pal. They form a network linking the inner and outer membranes and the peptidoglycan layer.

It is found in the periplasm. Part of the Tol-Pal system, which plays a role in outer membrane invagination during cell division and is important for maintaining outer membrane integrity. This Pseudomonas aeruginosa (strain ATCC 15692 / DSM 22644 / CIP 104116 / JCM 14847 / LMG 12228 / 1C / PRS 101 / PAO1) protein is Tol-Pal system protein TolB.